We begin with the raw amino-acid sequence, 95 residues long: Large ribosomal subunit protein uL23 (95 aa).

This sequence belongs to the universal ribosomal protein uL23 family. As to quaternary structure, part of the 50S ribosomal subunit. Contacts protein L29, and trigger factor when it is bound to the ribosome.

Its function is as follows. One of the early assembly proteins it binds 23S rRNA. One of the proteins that surrounds the polypeptide exit tunnel on the outside of the ribosome. Forms the main docking site for trigger factor binding to the ribosome. The polypeptide is Large ribosomal subunit protein uL23 (Geobacillus thermodenitrificans (strain NG80-2)).